A 173-amino-acid chain; its full sequence is MRLGYLIVGCAVALLATTDGVVDASSKHKQLSTDVPRPADDISSERFLRSQDTPEDDGNPAHEDRGYLTVLTNAAMHPLRERKMKNQIANLIKMDATDAELYAAGVQPHRLFDVIRHKDESVEMSLSQWVTMVHQHQFPSDYIWKSQAYRRFKQYAGFYDGMQRNGQRVASTT.

The signal sequence occupies residues 1–24 (MRLGYLIVGCAVALLATTDGVVDA). The disordered stretch occupies residues 25-64 (SSKHKQLSTDVPRPADDISSERFLRSQDTPEDDGNPAHED). Residues 37–49 (RPADDISSERFLR) are compositionally biased toward basic and acidic residues. The RxLR-dEER motif lies at 46–65 (RFLRSQDTPEDDGNPAHEDR).

The protein belongs to the RxLR effector family.

It is found in the secreted. It localises to the host nucleus. The protein localises to the host cytoplasm. Effector that leads to host programmed cell death. In Phytophthora infestans (strain T30-4) (Potato late blight agent), this protein is RxLR effector protein PITG_10232.